A 428-amino-acid polypeptide reads, in one-letter code: tRNA modification GTPase MnmE (428 aa).

(6S)-5-formyl-5,6,7,8-tetrahydrofolate contacts are provided by Arg20, Glu77, and Lys117. Residues 213 to 351 (GFEIALVGAP…LLEKIRSVFS (139 aa)) enclose the TrmE-type G domain. Residue Asn223 participates in K(+) binding. Residues 223 to 228 (NAGKST), 242 to 248 (SEIAGTT), and 267 to 270 (DTAG) each bind GTP. A Mg(2+)-binding site is contributed by Ser227. K(+)-binding residues include Ser242, Ile244, and Thr247. Thr248 contributes to the Mg(2+) binding site. Residue Lys428 coordinates (6S)-5-formyl-5,6,7,8-tetrahydrofolate.

This sequence belongs to the TRAFAC class TrmE-Era-EngA-EngB-Septin-like GTPase superfamily. TrmE GTPase family. Homodimer. Heterotetramer of two MnmE and two MnmG subunits. It depends on K(+) as a cofactor.

It localises to the cytoplasm. Its function is as follows. Exhibits a very high intrinsic GTPase hydrolysis rate. Involved in the addition of a carboxymethylaminomethyl (cmnm) group at the wobble position (U34) of certain tRNAs, forming tRNA-cmnm(5)s(2)U34. This is tRNA modification GTPase MnmE from Roseobacter denitrificans (strain ATCC 33942 / OCh 114) (Erythrobacter sp. (strain OCh 114)).